Here is a 250-residue protein sequence, read N- to C-terminus: UPF0758 protein tlr1707 (250 aa).

One can recognise an MPN domain in the interval 116 to 239 (TIIDSPALAA…YQSLREITPL (124 aa)). His-188, His-190, and Asp-201 together coordinate Zn(2+). The short motif at 188 to 201 (HNHPSGNLSPSQAD) is the JAMM motif element.

Belongs to the UPF0758 family.

The sequence is that of UPF0758 protein tlr1707 from Thermosynechococcus vestitus (strain NIES-2133 / IAM M-273 / BP-1).